A 358-amino-acid chain; its full sequence is Trace amine-associated receptor 7c (358 aa).

Topologically, residues 1-47 are extracellular; the sequence is MATDDDSFPWDQDSILSRDLLSASSLQLCYENLNRSCVRSPYSPGSR. Asn-34 carries an N-linked (GlcNAc...) asparagine glycan. Cystine bridges form between Cys-37-Cys-201 and Cys-120-Cys-205. A helical transmembrane segment spans residues 48–68; it reads LILYAVFGFGAVLAVCGNLLV. Residues 69–83 are Cytoplasmic-facing; it reads MTSILHFRQLHSPAN. Residues 84–104 form a helical membrane-spanning segment; sequence FLVASLACADLLVGLTVMPFS. Residues 105-125 are Extracellular-facing; it reads MVRSVEGCWYFGNTYCKFHSC. A helical membrane pass occupies residues 126-148; that stretch reads FEGSFCYSSLFHLCFISLDRYIA. At 149 to 166 the chain is on the cytoplasmic side; that stretch reads VSDPLIYPTRFTASISGK. A helical membrane pass occupies residues 167-187; the sequence is CITFSWLLSIIYSFSLLYTGA. Over 188–211 the chain is Extracellular; sequence NEAGLEDLVSALTCVGGCQVAVNQ. The chain crosses the membrane as a helical span at residues 212 to 232; it reads SWVFINFLLFLVPALVMMTVY. Over 233–274 the chain is Cytoplasmic; it reads SKIFLIAKQQAQNIEKMSKQTARASESYKDRVAKRERKAAKT. Residues 275–295 traverse the membrane as a helical segment; the sequence is LGIAVAAFLLSWLPYFIDSII. Residues 296–309 lie on the Extracellular side of the membrane; it reads DAFLGFITPTYMYE. A helical transmembrane segment spans residues 310–332; the sequence is ILVWIVYYNSAMNPLIYAFFYPW. Residues 333–358 are Cytoplasmic-facing; that stretch reads FRKAIKLIVTGKILRENSSTINLFPE.

Belongs to the G-protein coupled receptor 1 family.

It localises to the cell membrane. In terms of biological role, olfactory receptor specific for N,N-dimethylalkylamines trace amines. Trace amine compounds are enriched in animal body fluids and act on trace amine-associated receptors (TAARs) to elicit both intraspecific and interspecific innate behaviors. Ligand-binding causes a conformation change that triggers signaling via G(s)-class of G alpha proteins (GNAL or GNAS). This is Trace amine-associated receptor 7c from Rattus norvegicus (Rat).